A 312-amino-acid chain; its full sequence is Isethionate sulfite-lyase activating enzyme (312 aa).

A Radical SAM core domain is found at 20–304 (HDGPGIRTIV…GLQKTALDIL (285 aa)). Residues C34, C38, C41, C60, C66, C69, C73, C93, C96, C100, and C104 each contribute to the [4Fe-4S] cluster site. 40–42 (WCS) is an S-adenosyl-L-methionine binding site. 2 consecutive 4Fe-4S ferredoxin-type domains span residues 51–83 (AELA…CGDD) and 84–115 (DKPR…YGKK). Residues G144, 193–195 (DIK), and H267 each bind S-adenosyl-L-methionine.

The protein belongs to the organic radical-activating enzymes family. Monomer. The cofactor is [4Fe-4S] cluster.

The catalysed reaction is glycyl-[protein] + reduced [flavodoxin] + S-adenosyl-L-methionine = glycin-2-yl radical-[protein] + semiquinone [flavodoxin] + 5'-deoxyadenosine + L-methionine + H(+). Its pathway is organosulfur degradation; alkanesulfonate degradation. Its function is as follows. Involved in an anaerobic respiration pathway that converts the sulfonate isethionate (2-hydroxyethanesulfonate) to ammonia, acetate and sulfide. Catalyzes activation of the isethionate sulfite-lyase IslA under anaerobic conditions by generation of an organic free radical on a glycine residue, via a homolytic cleavage of S-adenosyl-L-methionine (SAM). This chain is Isethionate sulfite-lyase activating enzyme, found in Desulfovibrio desulfuricans (strain ATCC 27774 / DSM 6949 / MB).